Consider the following 191-residue polypeptide: uncharacterized protein (191 aa).

The region spanning 5–65 (GDSREKILHT…IEAVTYTGKI (61 aa)) is the HTH tetR-type domain. Positions 28–47 (GLNQIVKESGAPKGSLYHFF) form a DNA-binding region, H-T-H motif.

This is an uncharacterized protein from Bacillus subtilis (strain 168).